Reading from the N-terminus, the 114-residue chain is Non-specific lipid-transfer protein 1 (114 aa).

The first 25 residues, 1–25, serve as a signal peptide directing secretion; that stretch reads MIKGLAITVVAVLAVVQLLARPSDA. 4 disulfides stabilise this stretch: Cys29-Cys76, Cys39-Cys53, Cys54-Cys99, and Cys74-Cys113.

It belongs to the plant LTP family. As to expression, expressed in seeds and, at very low levels, in pulp of fruit (at protein level).

Functionally, plant non-specific lipid-transfer proteins transfer phospholipids as well as galactolipids across membranes. May play a role in wax or cutin deposition in the cell walls of expanding epidermal cells and certain secretory tissues. This Actinidia chinensis var. chinensis (Chinese soft-hair kiwi) protein is Non-specific lipid-transfer protein 1.